A 369-amino-acid polypeptide reads, in one-letter code: Peptide chain release factor subunit 1 (369 aa).

The protein belongs to the eukaryotic release factor 1 family. In terms of assembly, heterodimer of two subunits, one of which binds GTP.

It is found in the cytoplasm. Functionally, directs the termination of nascent peptide synthesis (translation) in response to the termination codons UAA, UAG and UGA. This is Peptide chain release factor subunit 1 (prf1) from Saccharolobus solfataricus (strain ATCC 35092 / DSM 1617 / JCM 11322 / P2) (Sulfolobus solfataricus).